A 305-amino-acid polypeptide reads, in one-letter code: UDP-3-O-acyl-N-acetylglucosamine deacetylase (305 aa).

The Zn(2+) site is built by His79, His238, and Asp242. Residue His265 is the Proton donor of the active site.

The protein belongs to the LpxC family. The cofactor is Zn(2+).

The enzyme catalyses a UDP-3-O-[(3R)-3-hydroxyacyl]-N-acetyl-alpha-D-glucosamine + H2O = a UDP-3-O-[(3R)-3-hydroxyacyl]-alpha-D-glucosamine + acetate. It participates in glycolipid biosynthesis; lipid IV(A) biosynthesis; lipid IV(A) from (3R)-3-hydroxytetradecanoyl-[acyl-carrier-protein] and UDP-N-acetyl-alpha-D-glucosamine: step 2/6. Catalyzes the hydrolysis of UDP-3-O-myristoyl-N-acetylglucosamine to form UDP-3-O-myristoylglucosamine and acetate, the committed step in lipid A biosynthesis. The sequence is that of UDP-3-O-acyl-N-acetylglucosamine deacetylase from Shigella boydii serotype 4 (strain Sb227).